A 170-amino-acid polypeptide reads, in one-letter code: RNA pyrophosphohydrolase (170 aa).

The 154-residue stretch at 9–162 (PYRPCAGIMV…KRAVYEKVVA (154 aa)) folds into the Nudix hydrolase domain. Residues 50–71 (GGIDDGERPLTAAIRELYEETG) carry the Nudix box motif.

The protein belongs to the Nudix hydrolase family. RppH subfamily. A divalent metal cation is required as a cofactor.

In terms of biological role, accelerates the degradation of transcripts by removing pyrophosphate from the 5'-end of triphosphorylated RNA, leading to a more labile monophosphorylated state that can stimulate subsequent ribonuclease cleavage. The sequence is that of RNA pyrophosphohydrolase from Agrobacterium fabrum (strain C58 / ATCC 33970) (Agrobacterium tumefaciens (strain C58)).